A 542-amino-acid chain; its full sequence is Chaperonin GroEL 2 (542 aa).

Residues Thr-30–Pro-33, Lys-51, Asp-87–Thr-91, Gly-415, and Asp-496 contribute to the ATP site.

This sequence belongs to the chaperonin (HSP60) family. As to quaternary structure, forms a cylinder of 14 subunits composed of two heptameric rings stacked back-to-back. Interacts with the co-chaperonin GroES.

It localises to the cytoplasm. The enzyme catalyses ATP + H2O + a folded polypeptide = ADP + phosphate + an unfolded polypeptide.. In terms of biological role, together with its co-chaperonin GroES, plays an essential role in assisting protein folding. The GroEL-GroES system forms a nano-cage that allows encapsulation of the non-native substrate proteins and provides a physical environment optimized to promote and accelerate protein folding. This is Chaperonin GroEL 2 from Cereibacter sphaeroides (strain ATCC 17023 / DSM 158 / JCM 6121 / CCUG 31486 / LMG 2827 / NBRC 12203 / NCIMB 8253 / ATH 2.4.1.) (Rhodobacter sphaeroides).